Here is a 338-residue protein sequence, read N- to C-terminus: Large ribosomal subunit protein uL3 (338 aa).

The segment at 1 to 37 is disordered; the sequence is MPQPSRPRKGSMGFSPRKRAESEVPRIRSWASNDGAP.

This sequence belongs to the universal ribosomal protein uL3 family. As to quaternary structure, part of the 50S ribosomal subunit. Forms a cluster with proteins L14 and L24e.

Its function is as follows. One of the primary rRNA binding proteins, it binds directly near the 3'-end of the 23S rRNA, where it nucleates assembly of the 50S subunit. This Haloquadratum walsbyi (strain DSM 16790 / HBSQ001) protein is Large ribosomal subunit protein uL3.